Here is a 309-residue protein sequence, read N- to C-terminus: Fructosamine-3-kinase (309 aa).

The residue at position 1 (M1) is an N-acetylmethionine. 89 to 91 (EHL) is a binding site for ATP. D217 serves as the catalytic Proton acceptor.

The protein belongs to the fructosamine kinase family. Monomer. As to expression, widely expressed. Expressed in erythrocytes.

The enzyme catalyses N(6)-(D-fructosyl)-L-lysyl-[protein] + ATP = N(6)-(3-O-phospho-D-fructosyl)-L-lysyl-[protein] + ADP + H(+). It catalyses the reaction N(6)-D-ribulosyl-L-lysyl-[protein] + ATP = N(6)-(3-O-phospho-D-ribulosyl)-L-lysyl-[protein] + ADP + H(+). It carries out the reaction N(6)-(D-psicosyl)-L-lysyl-[protein] + ATP = N(6)-(3-O-phospho-D-psicosyl)-L-lysyl-[protein] + ADP + H(+). Its function is as follows. Fructosamine-3-kinase involved in protein deglycation by mediating phosphorylation of fructoselysine residues on glycated proteins, to generate fructoselysine-3 phosphate. Fructoselysine-3 phosphate adducts are unstable and decompose under physiological conditions. Involved in intracellular deglycation in erythrocytes. Involved in the response to oxidative stress by mediating deglycation of NFE2L2/NRF2, glycation impairing NFE2L2/NRF2 function. Also able to phosphorylate psicosamines and ribulosamines. The chain is Fructosamine-3-kinase from Homo sapiens (Human).